We begin with the raw amino-acid sequence, 512 residues long: ATP synthase subunit alpha (512 aa).

169–176 (GDRQTGKT) is an ATP binding site.

It belongs to the ATPase alpha/beta chains family. In terms of assembly, F-type ATPases have 2 components, CF(1) - the catalytic core - and CF(0) - the membrane proton channel. CF(1) has five subunits: alpha(3), beta(3), gamma(1), delta(1), epsilon(1). CF(0) has three main subunits: a(1), b(2) and c(9-12). The alpha and beta chains form an alternating ring which encloses part of the gamma chain. CF(1) is attached to CF(0) by a central stalk formed by the gamma and epsilon chains, while a peripheral stalk is formed by the delta and b chains.

It is found in the cell inner membrane. It carries out the reaction ATP + H2O + 4 H(+)(in) = ADP + phosphate + 5 H(+)(out). Functionally, produces ATP from ADP in the presence of a proton gradient across the membrane. The alpha chain is a regulatory subunit. The polypeptide is ATP synthase subunit alpha (Orientia tsutsugamushi (strain Ikeda) (Rickettsia tsutsugamushi)).